Here is a 387-residue protein sequence, read N- to C-terminus: Dual-specificity RNA methyltransferase RlmN (387 aa).

The Proton acceptor role is filled by E110. A Radical SAM core domain is found at 117-349; that stretch reads VGKAGALCVS…NRAGYASPIR (233 aa). C124 and C360 are disulfide-bonded. The [4Fe-4S] cluster site is built by C131, C135, and C138. S-adenosyl-L-methionine is bound by residues 186 to 187, S218, 240 to 242, and N317; these read GE and SLH. The active-site S-methylcysteine intermediate is C360.

This sequence belongs to the radical SAM superfamily. RlmN family. [4Fe-4S] cluster serves as cofactor.

The protein resides in the cytoplasm. It carries out the reaction adenosine(2503) in 23S rRNA + 2 reduced [2Fe-2S]-[ferredoxin] + 2 S-adenosyl-L-methionine = 2-methyladenosine(2503) in 23S rRNA + 5'-deoxyadenosine + L-methionine + 2 oxidized [2Fe-2S]-[ferredoxin] + S-adenosyl-L-homocysteine. The enzyme catalyses adenosine(37) in tRNA + 2 reduced [2Fe-2S]-[ferredoxin] + 2 S-adenosyl-L-methionine = 2-methyladenosine(37) in tRNA + 5'-deoxyadenosine + L-methionine + 2 oxidized [2Fe-2S]-[ferredoxin] + S-adenosyl-L-homocysteine. In terms of biological role, specifically methylates position 2 of adenine 2503 in 23S rRNA and position 2 of adenine 37 in tRNAs. m2A2503 modification seems to play a crucial role in the proofreading step occurring at the peptidyl transferase center and thus would serve to optimize ribosomal fidelity. In Hyphomonas neptunium (strain ATCC 15444), this protein is Dual-specificity RNA methyltransferase RlmN.